A 664-amino-acid chain; its full sequence is 1,4-alpha-glucan branching enzyme GlgB 2 (664 aa).

Over residues 1 to 17 the composition is skewed to basic and acidic residues; the sequence is MGGKEMRNCKELKHEKN. The disordered stretch occupies residues 1–31; it reads MGGKEMRNCKELKHEKNGNVTEKVGKNKGKS. D342 (nucleophile) is an active-site residue. E395 functions as the Proton donor in the catalytic mechanism.

This sequence belongs to the glycosyl hydrolase 13 family. GlgB subfamily. In terms of assembly, monomer.

It catalyses the reaction Transfers a segment of a (1-&gt;4)-alpha-D-glucan chain to a primary hydroxy group in a similar glucan chain.. It participates in glycan biosynthesis; glycogen biosynthesis. Catalyzes the formation of the alpha-1,6-glucosidic linkages in glycogen by scission of a 1,4-alpha-linked oligosaccharide from growing alpha-1,4-glucan chains and the subsequent attachment of the oligosaccharide to the alpha-1,6 position. The chain is 1,4-alpha-glucan branching enzyme GlgB 2 (glgB2) from Clostridium perfringens (strain 13 / Type A).